The sequence spans 473 residues: Cysteine--tRNA ligase (473 aa).

Residue cysteine 29 participates in Zn(2+) binding. Positions 31–41 match the 'HIGH' region motif; the sequence is PTVYDRAHLGN. Zn(2+) contacts are provided by cysteine 225, histidine 250, and glutamate 254. Residues 281–285 carry the 'KMSKS' region motif; that stretch reads KMSKS. Residue lysine 284 coordinates ATP.

The protein belongs to the class-I aminoacyl-tRNA synthetase family. As to quaternary structure, monomer. It depends on Zn(2+) as a cofactor.

It localises to the cytoplasm. It carries out the reaction tRNA(Cys) + L-cysteine + ATP = L-cysteinyl-tRNA(Cys) + AMP + diphosphate. The protein is Cysteine--tRNA ligase of Roseobacter denitrificans (strain ATCC 33942 / OCh 114) (Erythrobacter sp. (strain OCh 114)).